The primary structure comprises 532 residues: Spore germination protein 270-11 (532 aa).

2 disordered regions span residues 113–225 and 328–436; these read TTTS…GYGS and LSPT…TTGT. The span at 329-426 shows a compositional bias: low complexity; it reads SPTCSDSSSP…GSGSSSETQP (98 aa). Tandem repeats lie at residues 339-342, 343-346, 347-350, 351-354, 355-358, 359-362, 363-366, 367-370, 371-374, 375-378, 397-400, 401-404, and 405-408. The 10 X 4 AA tandem repeats of T-[EP]-T-[EP] stretch occupies residues 339 to 378; the sequence is TPTPTETPTETPTETPTETPTETPTETPTETPTETETPTP. Positions 397–408 are 3 X 4 AA tandem repeats of T-[EP]-T-[PD]; sequence TPTPTETDTPTP.

The protein is Spore germination protein 270-11 (celB) of Dictyostelium discoideum (Social amoeba).